The sequence spans 374 residues: N5-carboxyaminoimidazole ribonucleotide synthase (374 aa).

Residues Arg-108, Lys-148, 153–159 (GYDGKGQ), 183–186 (EKYL), Glu-191, His-214, and 266–267 (NE) each bind ATP. One can recognise an ATP-grasp domain in the interval 112-296 (KETLKSAGTK…QFDTHILAVT (185 aa)).

Belongs to the PurK/PurT family. In terms of assembly, homodimer.

It catalyses the reaction 5-amino-1-(5-phospho-beta-D-ribosyl)imidazole + hydrogencarbonate + ATP = 5-carboxyamino-1-(5-phospho-D-ribosyl)imidazole + ADP + phosphate + 2 H(+). Its pathway is purine metabolism; IMP biosynthesis via de novo pathway; 5-amino-1-(5-phospho-D-ribosyl)imidazole-4-carboxylate from 5-amino-1-(5-phospho-D-ribosyl)imidazole (N5-CAIR route): step 1/2. Functionally, catalyzes the ATP-dependent conversion of 5-aminoimidazole ribonucleotide (AIR) and HCO(3)(-) to N5-carboxyaminoimidazole ribonucleotide (N5-CAIR). The sequence is that of N5-carboxyaminoimidazole ribonucleotide synthase from Staphylococcus aureus (strain MSSA476).